We begin with the raw amino-acid sequence, 723 residues long: Preterminal protein (723 aa).

The Nuclear localization signal signature appears at 453 to 462; it reads RLPMRRRRRR. A disordered region spans residues 457 to 492; the sequence is RRRRRRAPPPPPMSEELSEPEVEAFPPASPPRRSFE. Position 651 is an O-(5'-phospho-DNA)-serine (serine 651).

Belongs to the adenoviridae terminal protein family. Heterodimer with the polymerase; this heterodimer binds to bp 9 to 18 of the genome. Interacts with host POU2F1; POU2F1 binds to the auxiliary sequences in the inverted terminal repeats and tethers the pTP-POL heterodimer to the origin DNA thereby participating in the assembly of the pre-initiation complex (POL-TP-DBP-NFIA-POU2F1). Preterminal protein is used to replicate viral genome, upon genomic encapsidation it is processed first into iTP and finally into TP by adenovirus protease.

It localises to the host nucleus matrix. Protein covalently bound to the viral DNA that acts as a primer for viral genomic replication by DNA strand displacement. Assembles on the viral origin of replication in an initiation complex with viral polymerase, DBP, host NFIA and host POU2F1/OCT1. During initiation, the polymerase covalently couples the first dCTP with Ser-580 of pTP. The terminal protein stimulates the template activity over 20 fold compared to protein-free templates. Neo-synthesized viral genomes are linked to two preterminal proteins, one for each 5' end. These new genomes are encapsidated in the nucleus, and during capsid maturation by viral protease, preterminal protein is first cleaved into intermediary (iTP), then into mature TP. May play a role in host nuclear matrix localization of genomic DNA. The sequence is that of Preterminal protein from Canis lupus familiaris (Dog).